The primary structure comprises 351 residues: Photosystem II D2 protein (351 aa).

The chain crosses the membrane as a helical span at residues 39–59; it reads CSYLALGAWFTGTTFVTSWYT. His-116 contacts chlorophyll a. The chain crosses the membrane as a helical span at residues 123 to 139; the sequence is GFCLRQFEIARLVGIRP. Pheophytin a contacts are provided by Gln-128 and Asn-141. Residues 151–164 form a helical membrane-spanning segment; it reads VFVSVFLIYPLGQA. His-196 serves as a coordination point for chlorophyll a. Residues 206 to 226 traverse the membrane as a helical segment; sequence GALLCAIHGATVENTLFEDGE. 2 residues coordinate a plastoquinone: His-213 and Phe-260. His-213 is a Fe cation binding site. His-267 lines the Fe cation pocket. The chain crosses the membrane as a helical span at residues 277–293; that stretch reads GLWTSSIGIIGLALNLR.

It belongs to the reaction center PufL/M/PsbA/D family. PSII is composed of 1 copy each of membrane proteins PsbA, PsbB, PsbC, PsbD, PsbE, PsbF, PsbH, PsbI, PsbJ, PsbK, PsbL, PsbM, PsbT, PsbY, PsbZ, Psb30/Ycf12, at least 3 peripheral proteins of the oxygen-evolving complex and a large number of cofactors. It forms dimeric complexes. The cofactor is The D1/D2 heterodimer binds P680, chlorophylls that are the primary electron donor of PSII, and subsequent electron acceptors. It shares a non-heme iron and each subunit binds pheophytin, quinone, additional chlorophylls, carotenoids and lipids. There is also a Cl(-1) ion associated with D1 and D2, which is required for oxygen evolution. The PSII complex binds additional chlorophylls, carotenoids and specific lipids..

It localises to the plastid. The protein resides in the chloroplast thylakoid membrane. It carries out the reaction 2 a plastoquinone + 4 hnu + 2 H2O = 2 a plastoquinol + O2. Photosystem II (PSII) is a light-driven water:plastoquinone oxidoreductase that uses light energy to abstract electrons from H(2)O, generating O(2) and a proton gradient subsequently used for ATP formation. It consists of a core antenna complex that captures photons, and an electron transfer chain that converts photonic excitation into a charge separation. The D1/D2 (PsbA/PsbD) reaction center heterodimer binds P680, the primary electron donor of PSII as well as several subsequent electron acceptors. D2 is needed for assembly of a stable PSII complex. This is Photosystem II D2 protein from Galdieria sulphuraria (Red alga).